Here is a 779-residue protein sequence, read N- to C-terminus: Guanyl-specific ribonuclease pgl-1 (779 aa).

Residues 203–464 are involved in dimerization; it reads KLLLEGVKEQ…KRIIDALEKS (262 aa). His-453 acts as the Proton acceptor in catalysis. 3 disordered regions span residues 563–596, 611–661, and 718–779; these read HEPQ…PTKS, RDAL…GDAT, and GRGG…GGNF. A compositionally biased stretch (polar residues) spans 584–595; sequence SISTDGWDSPTK. Basic and acidic residues predominate over residues 612–626; that stretch reads DALKPDSVNSHRSEE. The interval 699–772 is RNA-binding RGG-box; it reads GGGGGSYGGR…GGDRGGRGGY (74 aa).

Homodimer. Interacts with pgl-2 and pgl-3; this association is not required for P-granule localization of either pgl-2 or pgl-3. Interacts with ife-1. Interacts with prmt-1; the interaction is direct. Interacts with nmad-1. Interacts with P granule components meg-1, meg-3 and meg-4. Requires Does not require metal ions for catalytic activity. as cofactor.

The protein resides in the cytoplasmic granule. It carries out the reaction [RNA] containing guanosine + H2O = an [RNA fragment]-3'-guanosine-3'-phosphate + a 5'-hydroxy-ribonucleotide-3'-[RNA fragment].. In terms of biological role, guanyl-specific endoribonuclease which cleaves the phosphodiester bond in single-stranded RNA between the 3'-guanylic residue and the 5'-OH residue of adjacent nucleotide, resulting in the formation of a corresponding 2',3'-cyclic phosphate intermediate. Essential role in male and female postembryonic germline development; maternally provided protein maintains a population of proliferating germ cells and zygotic expression is required for correct oogenesis. Together with the P-granule component pgl-3, is involved in the formation of P-granules. Together with pgl-3, probably recruits other granule components such as pos-1, mex-3 and glh-1 to P-granules. In addition, may act redundantly with pgl-3 to protect germ cells from excessive germline apoptosis during normal oogenesis and development of the two gonadal arms. This may in part be through regulating the localization of sir-2.1 which is involved in germ cell apoptosis. May protect somatic cells from excessive apoptosis during normal development. In Caenorhabditis remanei (Caenorhabditis vulgaris), this protein is Guanyl-specific ribonuclease pgl-1.